A 180-amino-acid chain; its full sequence is Oligoribonuclease (180 aa).

The Exonuclease domain maps to 7 to 170 (LIWIDLEMTG…DDIRESIAEL (164 aa)). Y128 is an active-site residue.

Belongs to the oligoribonuclease family.

It is found in the cytoplasm. Its function is as follows. 3'-to-5' exoribonuclease specific for small oligoribonucleotides. The polypeptide is Oligoribonuclease (Pseudomonas aeruginosa (strain UCBPP-PA14)).